The primary structure comprises 248 residues: Phycocyanobilin:ferredoxin oxidoreductase (248 aa).

Belongs to the HY2 family.

The enzyme catalyses (2R,3Z)-phycocyanobilin + 4 oxidized [2Fe-2S]-[ferredoxin] = biliverdin IXalpha + 4 reduced [2Fe-2S]-[ferredoxin] + 4 H(+). Functionally, catalyzes the four-electron reduction of biliverdin IX-alpha (2-electron reduction at both the A and D rings); the reaction proceeds via an isolatable 2-electron intermediate, 181,182-dihydrobiliverdin. In Synechococcus elongatus (strain ATCC 33912 / PCC 7942 / FACHB-805) (Anacystis nidulans R2), this protein is Phycocyanobilin:ferredoxin oxidoreductase (pcyA).